Reading from the N-terminus, the 439-residue chain is Serine/threonine-protein kinase 2 (439 aa).

A Protein kinase domain is found at 87-439; sequence NDDFYHISTG…IFSDWINGGN (353 aa). ATP-binding positions include 93 to 101 and lysine 117; that span reads ISTGGYGIV. The active-site Proton acceptor is aspartate 307.

Belongs to the protein kinase superfamily. Ser/Thr protein kinase family. In terms of processing, phosphorylated in vivo. Autophosphorylated in vitro.

It localises to the host endoplasmic reticulum. It is found in the host endoplasmic reticulum-Golgi intermediate compartment. The enzyme catalyses L-seryl-[protein] + ATP = O-phospho-L-seryl-[protein] + ADP + H(+). It carries out the reaction L-threonyl-[protein] + ATP = O-phospho-L-threonyl-[protein] + ADP + H(+). Functionally, essential serine-protein kinase involved in the early stage of virion morphogenesis. This is Serine/threonine-protein kinase 2 (OPG054) from Bos taurus (Bovine).